The chain runs to 314 residues: Transcription factor TCP20 (314 aa).

2 disordered regions span residues 1–91 (MDPK…RGRR) and 295–314 (NHEE…GSGR). Basic and acidic residues-rich tracts occupy residues 38-49 (DENRKPTTEIKD) and 77-89 (SNKD…EGRG). Residues 78-132 (NKDRHTKVEGRGRRIRMPALCAARIFQLTRELGHKSDGETIQWLLQQAEPSIIAA) enclose the TCP domain.

Interacts with PURA1. Interacts with SPL.

The protein localises to the nucleus. In terms of biological role, transcription factor that binds to the site II motif (3'-TGGGCC/T-5') in the promoter of PCNA-2 and to 3'-GCCCG/A-5' elements in the promoters of cyclin CYCB1-1 and ribosomal protein genes. This is Transcription factor TCP20 (TCP20) from Arabidopsis thaliana (Mouse-ear cress).